A 267-amino-acid polypeptide reads, in one-letter code: Translation initiation factor 2 subunit alpha (267 aa).

The S1 motif domain maps to 12–83 (GELVVATVKE…RKKQVDVSLK (72 aa)).

It belongs to the eIF-2-alpha family. Heterotrimer composed of an alpha, a beta and a gamma chain.

In terms of biological role, eIF-2 functions in the early steps of protein synthesis by forming a ternary complex with GTP and initiator tRNA. The sequence is that of Translation initiation factor 2 subunit alpha from Hyperthermus butylicus (strain DSM 5456 / JCM 9403 / PLM1-5).